A 539-amino-acid polypeptide reads, in one-letter code: Chitin deacetylase 1 (539 aa).

The signal sequence occupies residues 1–23 (MARYARVATLAACLLFACALADG). The Chitin-binding type-2 domain maps to 42–104 (QELCKDKDAG…WKDAVKNCKL (63 aa)). 6 disulfides stabilise this stretch: Cys80-Cys93, Cys122-Cys134, Cys129-Cys147, Cys141-Cys156, Cys168-Cys180, and Cys173-Cys178. Residues 121 to 157 (LCQDGFLACGDSTCIERGLFCNGEKDCGDGSDENSCD) form the LDL-receptor class A domain. Asp206 is a Zn(2+) binding site. Cystine bridges form between Cys230-Cys489, Cys354-Cys361, Cys391-Cys397, Cys497-Cys520, and Cys503-Cys523. Asn244 carries N-linked (GlcNAc...) asparagine glycosylation. Positions 261 and 265 each coordinate Zn(2+). Residue Asn296 is glycosylated (N-linked (GlcNAc...) asparagine).

This sequence belongs to the carbohydrate esterase 4 (CE4) family. Interacts with CPAP3-A1. The cofactor is Zn(2+). As to expression, highly expressed in epidermis and head. Moderate expression levels in fat body, Malpighian tubule, testis and midgut. Low expression in silk gland and ovary.

The protein resides in the secreted. It carries out the reaction [(1-&gt;4)-N-acetyl-beta-D-glucosaminyl](n) + n H2O = chitosan + n acetate. With respect to regulation, binding to the accessory protein CPAP3-A1 is essential for chitinase activity. In terms of biological role, hydrolyzes the N-acetamido groups of N-acetyl-D-glucosamine residues in chitin. The protein is Chitin deacetylase 1 of Bombyx mori (Silk moth).